Here is a 156-residue protein sequence, read N- to C-terminus: Large ribosomal subunit protein uL13 (156 aa).

The protein belongs to the universal ribosomal protein uL13 family. Part of the 50S ribosomal subunit.

Its function is as follows. This protein is one of the early assembly proteins of the 50S ribosomal subunit, although it is not seen to bind rRNA by itself. It is important during the early stages of 50S assembly. The chain is Large ribosomal subunit protein uL13 from Archaeoglobus fulgidus (strain ATCC 49558 / DSM 4304 / JCM 9628 / NBRC 100126 / VC-16).